The primary structure comprises 242 residues: Segregation and condensation protein A (242 aa).

It belongs to the ScpA family. In terms of assembly, component of a cohesin-like complex composed of ScpA, ScpB and the Smc homodimer, in which ScpA and ScpB bind to the head domain of Smc. The presence of the three proteins is required for the association of the complex with DNA.

It localises to the cytoplasm. Functionally, participates in chromosomal partition during cell division. May act via the formation of a condensin-like complex containing Smc and ScpB that pull DNA away from mid-cell into both cell halves. The protein is Segregation and condensation protein A of Streptococcus pneumoniae serotype 2 (strain D39 / NCTC 7466).